Reading from the N-terminus, the 81-residue chain is Small cysteine-rich protein 6 (81 aa).

The N-terminal stretch at 1–23 is a signal peptide; sequence MDTKVACLLLIILGALTVQGAVS. Residues 24 to 25 constitute a propeptide that is removed on maturation; that stretch reads GN.

This sequence belongs to the Cnidaria small cysteine-rich protein (SCRiP) family. beta subfamily. Post-translationally, contains 4 disulfide bonds.

Its subcellular location is the secreted. The protein resides in the nematocyst. Induces neurotoxic symptoms on zebrafish. Has also been claimed to be implied in calcification, but tests on homolog proteins suggest that proteins of this family have a neurotoxic function and not a calcification function. The sequence is that of Small cysteine-rich protein 6 from Orbicella faveolata (Mountainous star coral).